A 317-amino-acid polypeptide reads, in one-letter code: Cell division protein FtsQ (317 aa).

At 1 to 63 (MDGGGRFVFA…RIHIPAHTGT (63 aa)) the chain is on the cytoplasmic side. Residues 64–82 (ISAVAFYAMIGLYGMSLGG) form a helical membrane-spanning segment. Residues 83-317 (HTNIVTQTTT…KALKKAEKNT (235 aa)) lie on the Periplasmic side of the membrane. The POTRA domain maps to 97–165 (FAVEDVKVSG…KTVEVRLKER (69 aa)).

It belongs to the FtsQ/DivIB family. FtsQ subfamily.

It is found in the cell inner membrane. Functionally, essential cell division protein. In Agrobacterium fabrum (strain C58 / ATCC 33970) (Agrobacterium tumefaciens (strain C58)), this protein is Cell division protein FtsQ.